The sequence spans 89 residues: Small ribosomal subunit protein uS15 (89 aa).

This sequence belongs to the universal ribosomal protein uS15 family. As to quaternary structure, part of the 30S ribosomal subunit. Forms a bridge to the 50S subunit in the 70S ribosome, contacting the 23S rRNA.

Functionally, one of the primary rRNA binding proteins, it binds directly to 16S rRNA where it helps nucleate assembly of the platform of the 30S subunit by binding and bridging several RNA helices of the 16S rRNA. In terms of biological role, forms an intersubunit bridge (bridge B4) with the 23S rRNA of the 50S subunit in the ribosome. This Shewanella frigidimarina (strain NCIMB 400) protein is Small ribosomal subunit protein uS15.